Here is a 424-residue protein sequence, read N- to C-terminus: UPF0597 protein Sbal223_1296 (424 aa).

It belongs to the UPF0597 family.

This Shewanella baltica (strain OS223) protein is UPF0597 protein Sbal223_1296.